Reading from the N-terminus, the 280-residue chain is LLGVFHHTDLRKSLTVDEGTMKVEVLPALTDNYMYLVIDDETKEAAIVDPVQPQKVVEEAKKHGVMLTTVLTTHHHWDHAGGNEKLVKLEPGLKVYGGDDRIGGLTHKGTHLSTLQVGSLNVKCLSTPCHTSGHICYFVTKPGGSQPPAVFTGDTLFVAGCGKFYEGTADEMCKALLEVLGRFPPDTRVYCGHEYTINNLKFARHVESGNAAVQEKLAWAKEKYSIGEPAVPSTLAEEFTYNPFMRVREKTVQQHAGETDPVPTMRAVRREKDQFKVPRD.

N6-acetyllysine is present on K61. Positions 74, 76, 78, and 79 each coordinate Zn(2+). An N6-acetyllysine modification is found at K88. Positions 130 and 154 each coordinate Zn(2+). Substrate is bound by residues 163-165 (KFY) and 193-195 (HEY). Residue H193 participates in Zn(2+) binding. K201 bears the N6-acetyllysine; alternate mark. The residue at position 201 (K201) is an N6-succinyllysine; alternate. 269–272 (RREK) provides a ligand contact to substrate.

The protein belongs to the metallo-beta-lactamase superfamily. Glyoxalase II family. In terms of assembly, monomer. Zn(2+) is required as a cofactor. Testis.

Its subcellular location is the mitochondrion matrix. The protein localises to the cytoplasm. It catalyses the reaction an S-(2-hydroxyacyl)glutathione + H2O = a 2-hydroxy carboxylate + glutathione + H(+). The catalysed reaction is (R)-S-lactoylglutathione + H2O = (R)-lactate + glutathione + H(+). The protein operates within secondary metabolite metabolism; methylglyoxal degradation; (R)-lactate from methylglyoxal: step 2/2. In terms of biological role, thiolesterase that catalyzes the hydrolysis of S-D-lactoyl-glutathione to form glutathione and D-lactic acid. The protein is Hydroxyacylglutathione hydrolase, mitochondrial (HAGH) of Callithrix jacchus (White-tufted-ear marmoset).